We begin with the raw amino-acid sequence, 346 residues long: NADH-ubiquinone oxidoreductase chain 2 (346 aa).

A run of 10 helical transmembrane segments spans residues 25–45 (HWILAWTGLEINTLAIIPLIS), 52–72 (AIEAAIKYFLTQSTASALILF), 95–115 (CLILTMAIAIKLGLVPFHFWF), 124–144 (LITALLLSTLMKLPPMTLLLM), 149–169 (LNPALLTLLAVSSALVGGWMG), 178–196 (ILAFSSISHLGWMIVIIIY), 200–219 (LTILTFIIYSLMTSTVFLSL), 247–267 (TLLSLAGLPPLTGFMPKWLII), 274–294 (EMTPVATTIAMLSLLGLFFYL), and 326–346 (AILTVLSISLLPLSPLITTLV).

It belongs to the complex I subunit 2 family.

The protein resides in the mitochondrion inner membrane. The catalysed reaction is a ubiquinone + NADH + 5 H(+)(in) = a ubiquinol + NAD(+) + 4 H(+)(out). In terms of biological role, core subunit of the mitochondrial membrane respiratory chain NADH dehydrogenase (Complex I) that is believed to belong to the minimal assembly required for catalysis. Complex I functions in the transfer of electrons from NADH to the respiratory chain. The immediate electron acceptor for the enzyme is believed to be ubiquinone. The sequence is that of NADH-ubiquinone oxidoreductase chain 2 (MT-ND2) from Coturnix japonica (Japanese quail).